Consider the following 197-residue polypeptide: Holliday junction branch migration complex subunit RuvA (197 aa).

Residues Met1–His63 are domain I. The tract at residues Thr64–Leu142 is domain II. The interval Phe143–Glu149 is flexible linker. The interval Glu149 to Lys197 is domain III.

It belongs to the RuvA family. In terms of assembly, homotetramer. Forms an RuvA(8)-RuvB(12)-Holliday junction (HJ) complex. HJ DNA is sandwiched between 2 RuvA tetramers; dsDNA enters through RuvA and exits via RuvB. An RuvB hexamer assembles on each DNA strand where it exits the tetramer. Each RuvB hexamer is contacted by two RuvA subunits (via domain III) on 2 adjacent RuvB subunits; this complex drives branch migration. In the full resolvosome a probable DNA-RuvA(4)-RuvB(12)-RuvC(2) complex forms which resolves the HJ.

The protein localises to the cytoplasm. Functionally, the RuvA-RuvB-RuvC complex processes Holliday junction (HJ) DNA during genetic recombination and DNA repair, while the RuvA-RuvB complex plays an important role in the rescue of blocked DNA replication forks via replication fork reversal (RFR). RuvA specifically binds to HJ cruciform DNA, conferring on it an open structure. The RuvB hexamer acts as an ATP-dependent pump, pulling dsDNA into and through the RuvAB complex. HJ branch migration allows RuvC to scan DNA until it finds its consensus sequence, where it cleaves and resolves the cruciform DNA. The protein is Holliday junction branch migration complex subunit RuvA of Anoxybacillus flavithermus (strain DSM 21510 / WK1).